Reading from the N-terminus, the 414-residue chain is DNA polymerase IV (414 aa).

The 182-residue stretch at 8-189 folds into the UmuC domain; the sequence is IFHIDMNSFY…LPIEEMHGIG (182 aa). Mg(2+) is bound by residues D12 and D108. E109 is an active-site residue. The disordered stretch occupies residues 394–414; the sequence is EESKTRGTSFNRDFFQDEKKR.

Belongs to the DNA polymerase type-Y family. As to quaternary structure, monomer. Mg(2+) serves as cofactor.

It localises to the cytoplasm. The enzyme catalyses DNA(n) + a 2'-deoxyribonucleoside 5'-triphosphate = DNA(n+1) + diphosphate. Its function is as follows. Poorly processive, error-prone DNA polymerase involved in untargeted mutagenesis. Copies undamaged DNA at stalled replication forks, which arise in vivo from mismatched or misaligned primer ends. These misaligned primers can be extended by PolIV. Exhibits no 3'-5' exonuclease (proofreading) activity. May be involved in translesional synthesis, in conjunction with the beta clamp from PolIII. This is DNA polymerase IV from Bacillus velezensis (strain DSM 23117 / BGSC 10A6 / LMG 26770 / FZB42) (Bacillus amyloliquefaciens subsp. plantarum).